The sequence spans 349 residues: Nuclear distribution protein nudE homolog 1-B (349 aa).

Positions 22–189 (VAMKYKQCSE…ELAVQQKQEK (168 aa)) form a coiled coil.

This sequence belongs to the nudE family. Self-associates. Interacts with pafah1b1. In terms of processing, phosphorylated in mitosis.

The protein localises to the cytoplasm. Its subcellular location is the cytoskeleton. The protein resides in the microtubule organizing center. It localises to the centrosome. It is found in the spindle. The protein localises to the chromosome. Its subcellular location is the centromere. The protein resides in the kinetochore. It localises to the cleavage furrow. It is found in the cytoplasmic vesicle membrane. Required for centrosome duplication and formation and function of the mitotic spindle. This Xenopus laevis (African clawed frog) protein is Nuclear distribution protein nudE homolog 1-B (nde1-b).